The following is a 367-amino-acid chain: Trans-enoyl reductase opdC (367 aa).

NADP(+)-binding positions include 47-50, 199-202, Y217, 264-265, and 353-354; these read YDAK, SPHN, LD, and IT.

Belongs to the zinc-containing alcohol dehydrogenase family. In terms of assembly, monomer.

It functions in the pathway secondary metabolite biosynthesis. Trans-enoyl reductase; part of the gene cluster that mediates the biosynthesis of oxopyrrolidines, polyketide-amino acid hybrid compounds with feature structures of tetramic acid. The polyketide chain is first assembled by the highly reducing PKS module of opdA using acetyl-CoA as the starter unit and five malonyl-CoA as the extender units. OpdC acts as a trans-acting enoyl reductase and reduces the terminal alkenyl to alkane. The 17R in oxopyrrolidine A and 15R, 17S in oxopyrrolidine B are generated by non-stereospecific catalysis of the ketoreductase (KR) domain and enoyl reductases. Then the polyketides with specific configurations are transferred to the NRPS module of opdA and linked to L-tyrosine to form an amide bond. Finally, the oxopyrrolidines are offloaded through a Dieckmann cyclization catalyzed by the terminal D domain to give a tetramic acid moiety. This Penicillium oxalicum (strain 114-2 / CGMCC 5302) (Penicillium decumbens) protein is Trans-enoyl reductase opdC.